Consider the following 148-residue polypeptide: Male-specific protein scotti (148 aa).

The disordered stretch occupies residues 56 to 78 (PQEPPLGVFPAQGGPNGPPRLRK). Asn129 carries N-linked (GlcNAc...) asparagine glycosylation.

The protein belongs to the male-specific scotti family.

Its function is as follows. Post-meiotically transcribed gene that has a role in late spermiogenesis; required for actin cone progression during spermatid individualization. The polypeptide is Male-specific protein scotti (Drosophila sechellia (Fruit fly)).